A 374-amino-acid polypeptide reads, in one-letter code: uncharacterized protein (374 aa).

The N-terminal stretch at 1 to 26 (MNNLIKAYAAGVMSAAFLFGSEGRVR) is a signal peptide.

This is an uncharacterized protein from Treponema pallidum (strain Nichols).